Reading from the N-terminus, the 109-residue chain is uncharacterized protein (109 aa).

This is an uncharacterized protein from Bos taurus (Bovine).